Reading from the N-terminus, the 261-residue chain is Na(+)-translocating NADH-quinone reductase subunit C (261 aa).

The chain crosses the membrane as a helical span at residues 12–32 (LGVVIGLSLVCSIIVSTAAVG). Thr229 is modified (FMN phosphoryl threonine).

It belongs to the NqrC family. In terms of assembly, composed of six subunits; NqrA, NqrB, NqrC, NqrD, NqrE and NqrF. FMN serves as cofactor.

Its subcellular location is the cell inner membrane. The enzyme catalyses a ubiquinone + n Na(+)(in) + NADH + H(+) = a ubiquinol + n Na(+)(out) + NAD(+). Functionally, NQR complex catalyzes the reduction of ubiquinone-1 to ubiquinol by two successive reactions, coupled with the transport of Na(+) ions from the cytoplasm to the periplasm. NqrA to NqrE are probably involved in the second step, the conversion of ubisemiquinone to ubiquinol. This Vibrio parahaemolyticus serotype O3:K6 (strain RIMD 2210633) protein is Na(+)-translocating NADH-quinone reductase subunit C.